The sequence spans 1117 residues: DNA polymerase (1117 aa).

Residues 591-621 (ESSPVASFEEDSEQTSDSSLGEVSSQGSSDG) form a disordered region. Low complexity predominate over residues 606–618 (SDSSLGEVSSQGS).

The protein belongs to the DNA polymerase type-B family.

The protein localises to the host nucleus. It carries out the reaction DNA(n) + a 2'-deoxyribonucleoside 5'-triphosphate = DNA(n+1) + diphosphate. The polypeptide is DNA polymerase (Cavia porcellus (Guinea pig)).